Consider the following 691-residue polypeptide: DNA ligase (691 aa).

Residues 41–45 (DAEYD), 90–91 (SL), and Glu-130 each bind NAD(+). Lys-132 (N6-AMP-lysine intermediate) is an active-site residue. NAD(+) is bound by residues Arg-153, Glu-190, Lys-307, and Lys-331. Residues Cys-425, Cys-428, Cys-443, and Cys-449 each coordinate Zn(2+). One can recognise a BRCT domain in the interval 610-691 (APQGVLAGKT…LHQLLEGNTP (82 aa)).

It belongs to the NAD-dependent DNA ligase family. LigA subfamily. Mg(2+) is required as a cofactor. It depends on Mn(2+) as a cofactor.

It catalyses the reaction NAD(+) + (deoxyribonucleotide)n-3'-hydroxyl + 5'-phospho-(deoxyribonucleotide)m = (deoxyribonucleotide)n+m + AMP + beta-nicotinamide D-nucleotide.. DNA ligase that catalyzes the formation of phosphodiester linkages between 5'-phosphoryl and 3'-hydroxyl groups in double-stranded DNA using NAD as a coenzyme and as the energy source for the reaction. It is essential for DNA replication and repair of damaged DNA. The protein is DNA ligase of Burkholderia ambifaria (strain ATCC BAA-244 / DSM 16087 / CCUG 44356 / LMG 19182 / AMMD) (Burkholderia cepacia (strain AMMD)).